A 309-amino-acid chain; its full sequence is Glutaminase (309 aa).

Substrate is bound by residues Ser-64, Asn-114, Glu-160, Asn-167, Tyr-191, Tyr-243, and Val-261.

It belongs to the glutaminase family. As to quaternary structure, homotetramer.

It catalyses the reaction L-glutamine + H2O = L-glutamate + NH4(+). The polypeptide is Glutaminase (Methylobacterium sp. (strain 4-46)).